Consider the following 254-residue polypeptide: Ribonuclease HII (254 aa).

An RNase H type-2 domain is found at 70–254; it reads QAIAGIDEVG…TFEPVKSMLG (185 aa). 3 residues coordinate a divalent metal cation: aspartate 76, glutamate 77, and aspartate 168.

It belongs to the RNase HII family. Requires Mn(2+) as cofactor. The cofactor is Mg(2+).

Its subcellular location is the cytoplasm. It carries out the reaction Endonucleolytic cleavage to 5'-phosphomonoester.. In terms of biological role, endonuclease that specifically degrades the RNA of RNA-DNA hybrids. The polypeptide is Ribonuclease HII (Streptococcus gordonii (strain Challis / ATCC 35105 / BCRC 15272 / CH1 / DL1 / V288)).